Reading from the N-terminus, the 1113-residue chain is Translation initiation factor IF-2 (1113 aa).

4 stretches are compositionally biased toward polar residues: residues 56 to 72 (QSNQ…SSKE), 129 to 139 (KANTSNQSKGV), 162 to 187 (LENN…TQLV), and 194 to 205 (TKNNEPPQQKTS). Disordered stretches follow at residues 56–446 (QSNQ…IGEN) and 470–504 (LARP…RQRR). Positions 248–265 (PVQPRTQNNQNRQRIPNK) are enriched in low complexity. Residues 415–429 (RRSDWDDAAKLEALR) show a composition bias toward basic and acidic residues. 2 stretches are compositionally biased toward basic residues: residues 474-483 (AKPKSTKKSN) and 490-504 (TRKR…RQRR). Residues 605 to 777 (RRPPVVTVMG…VLLVTEVEDL (173 aa)) form the tr-type G domain. The segment at 614-621 (GHVDHGKT) is G1. 614-621 (GHVDHGKT) is a GTP binding site. A G2 region spans residues 639 to 643 (GITQH). A G3 region spans residues 664–667 (DTPG). GTP contacts are provided by residues 664–668 (DTPGH) and 718–721 (NKID). A G4 region spans residues 718–721 (NKID). Residues 754 to 756 (SAI) form a G5 region.

Belongs to the TRAFAC class translation factor GTPase superfamily. Classic translation factor GTPase family. IF-2 subfamily.

Its subcellular location is the cytoplasm. Functionally, one of the essential components for the initiation of protein synthesis. Protects formylmethionyl-tRNA from spontaneous hydrolysis and promotes its binding to the 30S ribosomal subunits. Also involved in the hydrolysis of GTP during the formation of the 70S ribosomal complex. This Prochlorococcus marinus (strain MIT 9211) protein is Translation initiation factor IF-2.